The chain runs to 693 residues: Methionine--tRNA ligase (693 aa).

The 'HIGH' region signature appears at 12–22; sequence PYANGPLHLGH. Zn(2+)-binding residues include Cys-143, Cys-146, Cys-156, and Cys-159. The 'KMSKS' region signature appears at 330 to 334; it reads KMSKS. Residue Lys-333 participates in ATP binding. The segment at 557 to 576 is disordered; the sequence is APTAKNEAAKPAAPAAAKTE. A tRNA-binding domain is found at 590–693; sequence DFAKLDLRIG…SGAQPGMPVR (104 aa).

The protein belongs to the class-I aminoacyl-tRNA synthetase family. MetG type 1 subfamily. As to quaternary structure, homodimer. It depends on Zn(2+) as a cofactor.

The protein resides in the cytoplasm. The enzyme catalyses tRNA(Met) + L-methionine + ATP = L-methionyl-tRNA(Met) + AMP + diphosphate. In terms of biological role, is required not only for elongation of protein synthesis but also for the initiation of all mRNA translation through initiator tRNA(fMet) aminoacylation. The protein is Methionine--tRNA ligase of Stenotrophomonas maltophilia (strain R551-3).